Reading from the N-terminus, the 325-residue chain is tRNA dimethylallyltransferase (325 aa).

21–28 (GPTASGKS) serves as a coordination point for ATP. 23–28 (TASGKS) serves as a coordination point for substrate. The interaction with substrate tRNA stretch occupies residues 166 to 170 (QRLAR).

Belongs to the IPP transferase family. In terms of assembly, monomer. It depends on Mg(2+) as a cofactor.

The enzyme catalyses adenosine(37) in tRNA + dimethylallyl diphosphate = N(6)-dimethylallyladenosine(37) in tRNA + diphosphate. Catalyzes the transfer of a dimethylallyl group onto the adenine at position 37 in tRNAs that read codons beginning with uridine, leading to the formation of N6-(dimethylallyl)adenosine (i(6)A). The polypeptide is tRNA dimethylallyltransferase (Acidiphilium cryptum (strain JF-5)).